The sequence spans 86 residues: uncharacterized protein (86 aa).

This sequence to C.jejuni CJ0253.

This is an uncharacterized protein from Helicobacter pylori (strain J99 / ATCC 700824) (Campylobacter pylori J99).